Reading from the N-terminus, the 294-residue chain is N-acetylmuramic acid 6-phosphate etherase (294 aa).

The SIS domain occupies 54–217 (VIQSFEEEGR…STASMIGVGK (164 aa)). Glu82 (proton donor) is an active-site residue. Glu113 is a catalytic residue.

Belongs to the GCKR-like family. MurNAc-6-P etherase subfamily. As to quaternary structure, homodimer.

The catalysed reaction is N-acetyl-D-muramate 6-phosphate + H2O = N-acetyl-D-glucosamine 6-phosphate + (R)-lactate. It participates in amino-sugar metabolism; N-acetylmuramate degradation. In terms of biological role, specifically catalyzes the cleavage of the D-lactyl ether substituent of MurNAc 6-phosphate, producing GlcNAc 6-phosphate and D-lactate. The polypeptide is N-acetylmuramic acid 6-phosphate etherase (Bacillus cereus (strain ZK / E33L)).